The primary structure comprises 295 residues: Ribosomal protein L11 methyltransferase (295 aa).

The S-adenosyl-L-methionine site is built by Thr138, Gly161, Asp183, and Asn230.

It belongs to the methyltransferase superfamily. PrmA family.

The protein resides in the cytoplasm. The enzyme catalyses L-lysyl-[protein] + 3 S-adenosyl-L-methionine = N(6),N(6),N(6)-trimethyl-L-lysyl-[protein] + 3 S-adenosyl-L-homocysteine + 3 H(+). In terms of biological role, methylates ribosomal protein L11. The polypeptide is Ribosomal protein L11 methyltransferase (Bradyrhizobium diazoefficiens (strain JCM 10833 / BCRC 13528 / IAM 13628 / NBRC 14792 / USDA 110)).